Reading from the N-terminus, the 206-residue chain is Small ribosomal subunit protein uS4 (206 aa).

The S4 RNA-binding domain maps to Ser96–Ala156.

This sequence belongs to the universal ribosomal protein uS4 family. In terms of assembly, part of the 30S ribosomal subunit. Contacts protein S5. The interaction surface between S4 and S5 is involved in control of translational fidelity.

One of the primary rRNA binding proteins, it binds directly to 16S rRNA where it nucleates assembly of the body of the 30S subunit. Its function is as follows. With S5 and S12 plays an important role in translational accuracy. The chain is Small ribosomal subunit protein uS4 from Laribacter hongkongensis (strain HLHK9).